The chain runs to 654 residues: tRNA uridine 5-carboxymethylaminomethyl modification enzyme MnmG (654 aa).

17-22 (GGGHAG) is an FAD binding site. 289-303 (GPRYCPSIEDKIVKF) serves as a coordination point for NAD(+).

The protein belongs to the MnmG family. In terms of assembly, homodimer. Heterotetramer of two MnmE and two MnmG subunits. The cofactor is FAD.

Its subcellular location is the cytoplasm. Its function is as follows. NAD-binding protein involved in the addition of a carboxymethylaminomethyl (cmnm) group at the wobble position (U34) of certain tRNAs, forming tRNA-cmnm(5)s(2)U34. This chain is tRNA uridine 5-carboxymethylaminomethyl modification enzyme MnmG, found in Prochlorococcus marinus (strain MIT 9515).